A 724-amino-acid chain; its full sequence is Pre-mRNA-splicing factor CLF1 (724 aa).

HAT repeat units lie at residues 55-87 (EFQA…WEAS), 89-121 (NEYE…MELK), 123-155 (RNIN…LEEL), 157-188 (LNVS…LEER), 190-221 (NELD…FEED), 223-262 (GQPD…METR), 264-298 (KEFE…FEKQ), 308-340 (TVLG…LEED), 352-386 (VEPM…LWLQ), 396-432 (KDYD…FEIR), 434-465 (LDVS…LEMR), 467-499 (REFD…VESA), 501-534 (EDFE…FEAG), 536-567 (GERE…MEIA), 585-626 (GDAD…EHGD), and 635-667 (DMLP…DDEK). The segment at 681–724 (QAWAQQRAGQGEEGGLSYDLPSDSESENEDEDGDNREEEGMDQD) is disordered. Positions 702-724 (SDSESENEDEDGDNREEEGMDQD) are enriched in acidic residues.

The protein belongs to the crooked-neck family. In terms of assembly, associated with the spliceosome.

It localises to the nucleus. In terms of biological role, involved in pre-mRNA splicing and cell cycle progression. Required for the spliceosome assembly and initiation of the DNA replication. The sequence is that of Pre-mRNA-splicing factor CLF1 (CLF1) from Cryptococcus neoformans var. grubii serotype A (strain H99 / ATCC 208821 / CBS 10515 / FGSC 9487) (Filobasidiella neoformans var. grubii).